Reading from the N-terminus, the 875-residue chain is F-box only protein 41 (875 aa).

3 disordered regions span residues 85-110 (ESTSFQGKEQAAGPSPAAPHLLHHHH), 165-194 (SSACSTPPPGPGPGPCPGPASASPASPSPA), and 347-542 (SSSC…PSRS). Over residues 170–182 (TPPPGPGPGPCPG) the composition is skewed to pro residues. A compositionally biased stretch (low complexity) spans 183 to 194 (PASASPASPSPA). Residues 209-351 (ALEKLEVDRR…QLQVISSSCG (143 aa)) adopt a coiled-coil conformation. Residues 347–356 (SSSCGSTPSA) show a composition bias toward polar residues. The span at 359–368 (GRGGGGGGAG) shows a compositional bias: gly residues. Position 360 is an omega-N-methylarginine (Arg-360). A compositionally biased stretch (polar residues) spans 395-416 (HGSSPSTGASSRVPAASQSSGC). Ser-478 is subject to Phosphoserine. Thr-479 carries the post-translational modification Phosphothreonine. The F-box domain maps to 496-540 (SEAEGPLDAPRPGPAMAGPLSSCRLSARPEGGSGRGRRAERVSPS). Ser-762 is modified (phosphoserine).

In terms of assembly, directly interacts with SKP1 and CUL1.

In terms of biological role, substrate-recognition component of the SCF (SKP1-CUL1-F-box protein)-type E3 ubiquitin ligase complex. The sequence is that of F-box only protein 41 (FBXO41) from Homo sapiens (Human).